The primary structure comprises 381 residues: Homoserine O-succinyltransferase (381 aa).

An AB hydrolase-1 domain is found at 45-360 (NAVLVCHALN…PHGHDAFLLD (316 aa)). Ser151 functions as the Nucleophile in the catalytic mechanism. Arg221 serves as a coordination point for substrate. Active-site residues include Asp321 and His354. Asp355 contributes to the substrate binding site.

Belongs to the AB hydrolase superfamily. MetX family. In terms of assembly, homodimer.

It localises to the cytoplasm. The enzyme catalyses L-homoserine + succinyl-CoA = O-succinyl-L-homoserine + CoA. The protein operates within amino-acid biosynthesis; L-methionine biosynthesis via de novo pathway; O-succinyl-L-homoserine from L-homoserine: step 1/1. Its function is as follows. Transfers a succinyl group from succinyl-CoA to L-homoserine, forming succinyl-L-homoserine. In Paraburkholderia xenovorans (strain LB400), this protein is Homoserine O-succinyltransferase.